Consider the following 146-residue polypeptide: Microsomal glutathione S-transferase 2 (146 aa).

3 consecutive transmembrane segments (helical) span residues Ile-6–Val-26, Phe-59–Ala-79, and Ser-111–Leu-131.

The protein belongs to the MAPEG family. Homotrimer.

It localises to the endoplasmic reticulum membrane. The protein resides in the microsome membrane. It carries out the reaction RX + glutathione = an S-substituted glutathione + a halide anion + H(+). The enzyme catalyses 1-chloro-2,4-dinitrobenzene + glutathione = 2,4-dinitrophenyl-S-glutathione + chloride + H(+). It catalyses the reaction leukotriene C4 = leukotriene A4 + glutathione. The catalysed reaction is (5S)-hydroperoxy-(6E,8Z,11Z,14Z)-eicosatetraenoate + 2 glutathione = (5S)-hydroxy-(6E,8Z,11Z,14Z)-eicosatetraenoate + glutathione disulfide + H2O. With respect to regulation, each monomer binds on GSH molecule but only one subunit is catalytically active. Its function is as follows. Catalyzes several different glutathione-dependent reactions. Catalyzes the glutathione-dependent reduction of lipid hydroperoxides, such as 5-HPETE. Has glutathione transferase activity, toward xenobiotic electrophiles, such as 1-chloro-2, 4-dinitrobenzene (CDNB). Also catalyzes the conjugation of leukotriene A4 with reduced glutathione to form leukotriene C4 (LTC4). Involved in oxidative DNA damage induced by ER stress and anticancer agents by activating LTC4 biosynthetic machinery in nonimmune cells. The polypeptide is Microsomal glutathione S-transferase 2 (MGST2) (Bos taurus (Bovine)).